A 611-amino-acid polypeptide reads, in one-letter code: Oxidoreductase cicC (611 aa).

The signal sequence occupies residues 1-20; the sequence is MALRYLNKFSLLSLAVPTLA. Residues 45–46 and 65–66 contribute to the FAD site; these read NA and EA. Residues Asn76 and Asn113 are each glycosylated (N-linked (GlcNAc...) asparagine). Residues Val123 and 131–134 contribute to the FAD site; that span reads NLMT. Asn282, Asn410, and Asn475 each carry an N-linked (GlcNAc...) asparagine glycan. His547 serves as the catalytic Proton acceptor. The Proton donor role is filled by His547. Residue Ala581 participates in FAD binding. His591 serves as the catalytic Proton acceptor. 592 to 593 contacts FAD; sequence PI.

It belongs to the GMC oxidoreductase family. It depends on FAD as a cofactor.

It functions in the pathway phytotoxin biosynthesis. Its function is as follows. Oxidoreductase; part of the gene cluster that mediates the biosynthesis of cichorine, a phytotoxin active against knapweed, corn, and soybeans. The first step in the pathway is performed by the non-reducing polyketide synthase pkbA that condenses one acetyl-CoA starter unit with 3 malonyl-CoA units. PkbA also catalyzes one methylation step to produce 3-methylorsellinate. The nonribosomal peptide synthase-like protein cicB, the cytochrome P450 monooxygenase cicH and the O-methyltransferase cicE are involved in the conversion of 3-methylorsellinate into nidulol. CicB converts 3-methylorsellinate to a yet unidentified intermediate, cicH may play a ring-closing role for cichorine and cicE is plausibly responsible for the methylation of one of the phenol groups. The oxidoreductase cicC acts downstream with still unidentified enzymes to further convert nidulol into cichorine. In Emericella nidulans (strain FGSC A4 / ATCC 38163 / CBS 112.46 / NRRL 194 / M139) (Aspergillus nidulans), this protein is Oxidoreductase cicC.